Here is a 98-residue protein sequence, read N- to C-terminus: Peptide YY (98 aa).

An N-terminal signal peptide occupies residues 1-28; the sequence is MVAVRRPWPVMVAMLLVLLACLGALVDA. The residue at position 41 (serine 41) is a Phosphoserine. Tyrosine 64 is modified (tyrosine amide). The propeptide occupies 68-98; it reads EVPAALFSKLLFTDDSENLPFRSRPEGVDQW.

It belongs to the NPY family. The peptide YY form is cleaved at Pro-30 by the prolyl endopeptidase FAP (seprase) activity (in vitro) to generate peptide YY(3-36).

The protein resides in the secreted. Its function is as follows. This gut peptide inhibits exocrine pancreatic secretion, has a vasoconstrictory action and inhibitis jejunal and colonic mobility. The protein is Peptide YY (Pyy) of Rattus norvegicus (Rat).